We begin with the raw amino-acid sequence, 98 residues long: Putative zinc finger protein ORF98b (98 aa).

Residues Gly-54–His-77 form a C2H2-type zinc finger.

This chain is Putative zinc finger protein ORF98b, found in Acidianus convivator (ATV).